Reading from the N-terminus, the 185-residue chain is Ribosome-recycling factor (185 aa).

Belongs to the RRF family.

It is found in the cytoplasm. Functionally, responsible for the release of ribosomes from messenger RNA at the termination of protein biosynthesis. May increase the efficiency of translation by recycling ribosomes from one round of translation to another. In Nitrosospira multiformis (strain ATCC 25196 / NCIMB 11849 / C 71), this protein is Ribosome-recycling factor.